We begin with the raw amino-acid sequence, 739 residues long: DNA ligase (739 aa).

Residues 34 to 38 (DADYD), 83 to 84 (SL), and Glu-117 contribute to the NAD(+) site. The active-site N6-AMP-lysine intermediate is the Lys-119. NAD(+) is bound by residues Arg-140, Glu-175, Lys-291, and Lys-315. Residues Cys-420, Cys-423, Cys-438, and Cys-444 each contribute to the Zn(2+) site. The BRCT domain maps to 660-739 (ADDSPVAGKT…DGWLDLIGQA (80 aa)).

Belongs to the NAD-dependent DNA ligase family. LigA subfamily. Mg(2+) is required as a cofactor. The cofactor is Mn(2+).

It catalyses the reaction NAD(+) + (deoxyribonucleotide)n-3'-hydroxyl + 5'-phospho-(deoxyribonucleotide)m = (deoxyribonucleotide)n+m + AMP + beta-nicotinamide D-nucleotide.. Its function is as follows. DNA ligase that catalyzes the formation of phosphodiester linkages between 5'-phosphoryl and 3'-hydroxyl groups in double-stranded DNA using NAD as a coenzyme and as the energy source for the reaction. It is essential for DNA replication and repair of damaged DNA. This Ruegeria sp. (strain TM1040) (Silicibacter sp.) protein is DNA ligase.